We begin with the raw amino-acid sequence, 641 residues long: Threonine--tRNA ligase (641 aa).

Residues 1–61 enclose the TGS domain; sequence MPIITLPDGT…TQNSHIQIIT (61 aa). Residues 242–533 are catalytic; it reads DHRKLGKKYS…LIENYSGNFP (292 aa). C333, H384, and H510 together coordinate Zn(2+).

The protein belongs to the class-II aminoacyl-tRNA synthetase family. As to quaternary structure, homodimer. Zn(2+) serves as cofactor.

Its subcellular location is the cytoplasm. The catalysed reaction is tRNA(Thr) + L-threonine + ATP = L-threonyl-tRNA(Thr) + AMP + diphosphate + H(+). Catalyzes the attachment of threonine to tRNA(Thr) in a two-step reaction: L-threonine is first activated by ATP to form Thr-AMP and then transferred to the acceptor end of tRNA(Thr). Also edits incorrectly charged L-seryl-tRNA(Thr). The sequence is that of Threonine--tRNA ligase from Prochlorococcus marinus (strain NATL2A).